The following is a 304-amino-acid chain: Oxygen-dependent coproporphyrinogen-III oxidase (304 aa).

Substrate is bound at residue Ser-95. Positions 99 and 109 each coordinate a divalent metal cation. Residue His-109 is the Proton donor of the active site. Asn-111 to Arg-113 serves as a coordination point for substrate. A divalent metal cation-binding residues include His-148 and His-178. The interval Tyr-243–Arg-278 is important for dimerization. A substrate-binding site is contributed by Gly-261–Arg-263.

The protein belongs to the aerobic coproporphyrinogen-III oxidase family. Homodimer. The cofactor is a divalent metal cation.

The protein resides in the cytoplasm. The enzyme catalyses coproporphyrinogen III + O2 + 2 H(+) = protoporphyrinogen IX + 2 CO2 + 2 H2O. It functions in the pathway porphyrin-containing compound metabolism; protoporphyrin-IX biosynthesis; protoporphyrinogen-IX from coproporphyrinogen-III (O2 route): step 1/1. Its function is as follows. Involved in the heme biosynthesis. Catalyzes the aerobic oxidative decarboxylation of propionate groups of rings A and B of coproporphyrinogen-III to yield the vinyl groups in protoporphyrinogen-IX. The chain is Oxygen-dependent coproporphyrinogen-III oxidase from Thioalkalivibrio sulfidiphilus (strain HL-EbGR7).